The following is a 643-amino-acid chain: SURP and G-patch domain-containing protein 1 (643 aa).

Disordered stretches follow at residues 48-69 (ARME…HPGE) and 97-119 (KAQT…SSLK). T128 bears the Phosphothreonine mark. An SURP motif 1 repeat occupies 187-229 (VIEKLARFVAEGGPELEKVAMEDYKDNPAFTFLHDKNSREFLY). The residue at position 252 (S252) is a Phosphoserine. An SURP motif 2 repeat occupies 262 to 305 (LAEKLARFIADGGPEVETIALQNNRENQAFSFLYDPNSQGYRYY). Disordered stretches follow at residues 316-335 (KAGS…LRRK) and 360-393 (AVNP…DKVE). S322 carries the post-translational modification Phosphoserine. The Nuclear localization signal motif lies at 378–384 (KRKRKSR). Phosphoserine is present on residues S407, S409, S412, and S483. One can recognise a G-patch domain in the interval 560-607 (VENIGYQMLMKMGWKEGEGLGTEGQGIKNPVNKGATTIDGAGFGIDRP).

As to quaternary structure, component of the spliceosome.

It localises to the nucleus. Its function is as follows. Plays a role in pre-mRNA splicing. The polypeptide is SURP and G-patch domain-containing protein 1 (Sugp1) (Mus musculus (Mouse)).